Reading from the N-terminus, the 507-residue chain is Alpha-amylase 2 (507 aa).

The first 20 residues, 1 to 20 (MKFATILSTTALALSSLVAS), serve as a signal peptide directing secretion. Residues cysteine 62 and cysteine 70 are joined by a disulfide bond. Tryptophan 115 serves as a coordination point for substrate. Asparagine 153 lines the Ca(2+) pocket. Histidine 154 contributes to the substrate binding site. A disulfide bridge links cysteine 182 with cysteine 196. Glutamate 194 and aspartate 207 together coordinate Ca(2+). Asparagine 229 carries N-linked (GlcNAc...) asparagine glycosylation. Position 236 (arginine 236) interacts with substrate. The Ca(2+) site is built by aspartate 238, histidine 242, and glutamate 262. Aspartate 238 serves as the catalytic Nucleophile. Residue 241–242 (KH) coordinates substrate. The Proton donor role is filled by glutamate 262. Residue glycine 266 participates in substrate binding. The cysteines at positions 272 and 315 are disulfide-linked. Residues aspartate 329 and arginine 376 each contribute to the substrate site. The cysteines at positions 470 and 505 are disulfide-linked.

Belongs to the glycosyl hydrolase 13 family. Ca(2+) is required as a cofactor.

The catalysed reaction is Endohydrolysis of (1-&gt;4)-alpha-D-glucosidic linkages in polysaccharides containing three or more (1-&gt;4)-alpha-linked D-glucose units.. This is Alpha-amylase 2 (SWA2) from Schwanniomyces occidentalis (Yeast).